The following is a 524-amino-acid chain: Probable cytosol aminopeptidase (524 aa).

K288 and D293 together coordinate Mn(2+). K300 is a catalytic residue. The Mn(2+) site is built by D311, D370, and E372. R374 is an active-site residue.

The protein belongs to the peptidase M17 family. Mn(2+) serves as cofactor.

The protein localises to the cytoplasm. It carries out the reaction Release of an N-terminal amino acid, Xaa-|-Yaa-, in which Xaa is preferably Leu, but may be other amino acids including Pro although not Arg or Lys, and Yaa may be Pro. Amino acid amides and methyl esters are also readily hydrolyzed, but rates on arylamides are exceedingly low.. The catalysed reaction is Release of an N-terminal amino acid, preferentially leucine, but not glutamic or aspartic acids.. Functionally, presumably involved in the processing and regular turnover of intracellular proteins. Catalyzes the removal of unsubstituted N-terminal amino acids from various peptides. This chain is Probable cytosol aminopeptidase (pepA), found in Mycobacterium leprae (strain TN).